The chain runs to 364 residues: Aminomethyltransferase (364 aa).

Belongs to the GcvT family. In terms of assembly, the glycine cleavage system is composed of four proteins: P, T, L and H.

The enzyme catalyses N(6)-[(R)-S(8)-aminomethyldihydrolipoyl]-L-lysyl-[protein] + (6S)-5,6,7,8-tetrahydrofolate = N(6)-[(R)-dihydrolipoyl]-L-lysyl-[protein] + (6R)-5,10-methylene-5,6,7,8-tetrahydrofolate + NH4(+). The glycine cleavage system catalyzes the degradation of glycine. The polypeptide is Aminomethyltransferase (Escherichia coli (strain SMS-3-5 / SECEC)).